The following is a 331-amino-acid chain: GTP-binding protein RHO5 (331 aa).

GTP is bound at residue G10–T17. The disordered stretch occupies residues A51–T76. The span at S66 to S75 shows a compositional bias: low complexity. Residues D87–Q91 and T156–D159 contribute to the GTP site. Phosphoserine occurs at positions 223 and 228. 2 positions are modified to phosphothreonine: T232 and T244. Residues T239–L331 form a disordered region. The span at H258–Q273 shows a compositional bias: polar residues. K276 participates in a covalent cross-link: Glycyl lysine isopeptide (Lys-Gly) (interchain with G-Cter in ubiquitin). Positions G287 to K297 are enriched in basic and acidic residues. The span at H308–L331 shows a compositional bias: basic residues. C328 carries the cysteine methyl ester modification. C328 carries S-geranylgeranyl cysteine lipidation. The propeptide at V329 to L331 is removed in mature form.

This sequence belongs to the small GTPase superfamily. Rho family. In terms of assembly, interacts with RGD2.

It localises to the membrane. The protein resides in the mitochondrion. Functionally, small GTPase that negatively regulates a MAP kinase branch, downstream of SLT2, of the PKC1-mediated signal transduction pathway. With its specific guanine nucleotide exchange factor (GEF), the heterodimeric complex DCK1/LMO1, relocates to mitochondria upon oxidative stress and triggers cell death. The DCK1/LMO1/RHO5 signaling module that mediates mitochondrial turnover under nitrogen starvation conditions via mitophagy. The DCK1/LMO1/RHO5 signaling module also plays a role in cell wall integrity signaling. The polypeptide is GTP-binding protein RHO5 (Saccharomyces cerevisiae (strain ATCC 204508 / S288c) (Baker's yeast)).